A 74-amino-acid chain; its full sequence is Sec-independent protein translocase protein TatA (74 aa).

Residues 1 to 21 (MGTFSIWHWLIVLLVVVVVFG) form a helical membrane-spanning segment. The interval 50–74 (TAPAGQVANQSTADQTIDVQTKPKG) is disordered. A compositionally biased stretch (polar residues) spans 56 to 68 (VANQSTADQTIDV).

This sequence belongs to the TatA/E family. In terms of assembly, the Tat system comprises two distinct complexes: a TatABC complex, containing multiple copies of TatA, TatB and TatC subunits, and a separate TatA complex, containing only TatA subunits. Substrates initially bind to the TatABC complex, which probably triggers association of the separate TatA complex to form the active translocon.

The protein localises to the cell inner membrane. Functionally, part of the twin-arginine translocation (Tat) system that transports large folded proteins containing a characteristic twin-arginine motif in their signal peptide across membranes. TatA could form the protein-conducting channel of the Tat system. This Verminephrobacter eiseniae (strain EF01-2) protein is Sec-independent protein translocase protein TatA.